We begin with the raw amino-acid sequence, 592 residues long: Protein alan shepard (592 aa).

Residues 1–68 form a disordered region; that stretch reads MGGPHHQHQQ…ASVAAAPPTP (68 aa). Residues 18-28 show a composition bias toward gly residues; the sequence is VGGGNGHGGGA. Residues 36 to 54 are compositionally biased toward polar residues; sequence PNSQQLPPQMPRSQNYANG. A compositionally biased stretch (low complexity) spans 55–64; sequence SSSAASVAAA. A phosphotyrosine mark is found at Tyr-124 and Tyr-140. Residues 162 to 224 are disordered; it reads PATTTYGQRV…AQNQNQQGGE (63 aa). Low complexity predominate over residues 176–224; that stretch reads SPSNTNSSSSSNTGSQSGTLSTSLSNTTNTNTTMGPNGTAQNQNQQGGE. 2 consecutive RRM domains span residues 229–307 and 319–398; these read TNLY…IWVL and TNLY…FADG. Residues 565–592 form a disordered region; it reads PMTDSEQASTAASPDEAYTQYPHQAAPK.

Functionally, has a role in the perception of gravity. This chain is Protein alan shepard, found in Drosophila mojavensis (Fruit fly).